A 1258-amino-acid polypeptide reads, in one-letter code: Phospholipid-transporting ATPase C887.12 (1258 aa).

Disordered regions lie at residues 1–41 (MARD…LGED) and 53–83 (YISS…SKAN). The Cytoplasmic segment spans residues 1–183 (MARDVDNKQN…PKFLKEQFSK (183 aa)). Positions 53-64 (YISSSGQNSTNP) are enriched in polar residues. The chain crosses the membrane as a helical span at residues 184–204 (YANLFFLFTAVVQQIPGITPV). At 205-208 (NRYT) the chain is on the lumenal side. Residues 209–229 (TIGPMLIVLSVSGIKEIMEDI) form a helical membrane-spanning segment. The Cytoplasmic segment spans residues 230–406 (KRKKQDQELN…TSVEKQVNSQ (177 aa)). Residues 407 to 427 (ILFLLCIFVFLCFASSLGALI) traverse the membrane as a helical segment. Over 428-451 (HRSVYGSALSYVKYTSNRAGMFFK) the chain is Lumenal. The chain crosses the membrane as a helical span at residues 452–472 (GLLTFWILYSNLVPISLFVTF). The Cytoplasmic portion of the chain corresponds to 473-974 (ELVRYIQAQL…KLILYSFYKN (502 aa)). Catalysis depends on D518, which acts as the 4-aspartylphosphate intermediate. Residues D518, K519, T520, E613, F654, S656, K659, K677, R710, T711, T790, G791, D792, R883, and K889 each contribute to the ATP site. A Mg(2+)-binding site is contributed by D518. A Mg(2+)-binding site is contributed by T520. A Mg(2+)-binding site is contributed by D909. 2 residues coordinate ATP: N912 and D913. Position 913 (D913) interacts with Mg(2+). The helical transmembrane segment at 975–995 (IALYMTQFWYAFCNAFSGQVI) threads the bilayer. At 996–998 (FES) the chain is on the lumenal side. The helical transmembrane segment at 999–1019 (WSISLYNVLFTVLPPVVIGIF) threads the bilayer. At 1020-1051 (DQFVSAGQLFQYPQLYQLGQRSEFFNLKRFWS) the chain is on the cytoplasmic side. The helical transmembrane segment at 1052 to 1072 (WITNGFYHSLLLFLCSIAVFY) threads the bilayer. The Lumenal portion of the chain corresponds to 1073–1086 (YDGPNKDGLASGHW). A helical transmembrane segment spans residues 1087-1107 (VWGTTLYAAILATVLGKAALI). An a 1,2-diacyl-sn-glycero-3-phospho-(1D-myo-inositol 4-phosphate)-binding site is contributed by K1103. At 1108–1115 (SNHWTQYT) the chain is on the cytoplasmic side. Residues 1116–1136 (VIATLGSFLLWIVFMPIYAVA) form a helical membrane-spanning segment. Residues 1137-1148 (APAIGFSKEYYG) lie on the Lumenal side of the membrane. The chain crosses the membrane as a helical span at residues 1149–1169 (IIPHLYGNLKFWASLLVLPTI). The Cytoplasmic portion of the chain corresponds to 1170–1258 (ALMRDFVWKY…HTRGAYGEMR (89 aa)). The a 1,2-diacyl-sn-glycero-3-phospho-(1D-myo-inositol 4-phosphate) site is built by R1173, W1177, K1178, Y1189, and H1190.

Belongs to the cation transport ATPase (P-type) (TC 3.A.3) family. Type IV subfamily. The cofactor is Mg(2+).

It localises to the endoplasmic reticulum membrane. The protein localises to the golgi apparatus. The protein resides in the trans-Golgi network membrane. It catalyses the reaction ATP + H2O + phospholipidSide 1 = ADP + phosphate + phospholipidSide 2.. It carries out the reaction a 1,2-diacyl-sn-glycero-3-phospho-L-serine(out) + ATP + H2O = a 1,2-diacyl-sn-glycero-3-phospho-L-serine(in) + ADP + phosphate + H(+). The enzyme catalyses a 1,2-diacyl-sn-glycero-3-phosphoethanolamine(out) + ATP + H2O = a 1,2-diacyl-sn-glycero-3-phosphoethanolamine(in) + ADP + phosphate + H(+). Catalytic component of a P4-ATPase flippase complex which catalyzes the hydrolysis of ATP coupled to the transport of phosphatidylserine and small amounts of ethanolamine from the lumen to the cytosolic leaflet of the trans-Golgi network and ensures the maintenance of asymmetric distribution of phospholipids. The protein is Phospholipid-transporting ATPase C887.12 of Schizosaccharomyces pombe (strain 972 / ATCC 24843) (Fission yeast).